A 209-amino-acid polypeptide reads, in one-letter code: ATP phosphoribosyltransferase (209 aa).

This sequence belongs to the ATP phosphoribosyltransferase family. Short subfamily. As to quaternary structure, heteromultimer composed of HisG and HisZ subunits.

It localises to the cytoplasm. It catalyses the reaction 1-(5-phospho-beta-D-ribosyl)-ATP + diphosphate = 5-phospho-alpha-D-ribose 1-diphosphate + ATP. It functions in the pathway amino-acid biosynthesis; L-histidine biosynthesis; L-histidine from 5-phospho-alpha-D-ribose 1-diphosphate: step 1/9. In terms of biological role, catalyzes the condensation of ATP and 5-phosphoribose 1-diphosphate to form N'-(5'-phosphoribosyl)-ATP (PR-ATP). Has a crucial role in the pathway because the rate of histidine biosynthesis seems to be controlled primarily by regulation of HisG enzymatic activity. This is ATP phosphoribosyltransferase from Caldicellulosiruptor bescii (strain ATCC BAA-1888 / DSM 6725 / KCTC 15123 / Z-1320) (Anaerocellum thermophilum).